The chain runs to 102 residues: Large ribosomal subunit protein uL24 (102 aa).

Belongs to the universal ribosomal protein uL24 family. Part of the 50S ribosomal subunit.

Functionally, one of two assembly initiator proteins, it binds directly to the 5'-end of the 23S rRNA, where it nucleates assembly of the 50S subunit. In terms of biological role, one of the proteins that surrounds the polypeptide exit tunnel on the outside of the subunit. This chain is Large ribosomal subunit protein uL24, found in Burkholderia mallei (strain NCTC 10229).